The sequence spans 2844 residues: Sodium channel protein 60E (2844 aa).

Topologically, residues 1–121 (MSDDQATFND…WSPARRVCVY (121 aa)) are cytoplasmic. The I repeat unit spans residues 107-434 (FLFYPWSPAR…FDPSVLNVKK (328 aa)). Residues 122-145 (IATNQFFDYCVMATILFNCIFLAM) traverse the membrane as a helical segment. At 146–151 (TETVEE) the chain is on the extracellular side. The chain crosses the membrane as a helical span at residues 152-172 (AEYIFLAIYSIEMVIKIIAKG). Over 173–183 (FLLNKYTYLRN) the chain is Cytoplasmic. Residues 184-202 (PWNWLDFVVITSGYATIGM) traverse the membrane as a helical segment. Over 203 to 208 (EVGNLA) the chain is Extracellular. Residues 209-228 (GLRTFRVLRALKTVSIMPGL) traverse the membrane as a helical; Voltage-sensor segment. Topologically, residues 229-244 (KTIINALLHSFRQLAE) are cytoplasmic. A helical transmembrane segment spans residues 245 to 265 (VMTLTIFCLMVFALFALQVYM). Residues 266–340 (GELRNKCVRQ…PNHGYTNFDN (75 aa)) are Extracellular-facing. Cysteine 272 and cysteine 318 are oxidised to a cystine. Asparagine 282, asparagine 293, and asparagine 311 each carry an N-linked (GlcNAc...) asparagine glycan. Positions 341–365 (FMWSMLTTFQLITLDYWENVYNMVL) form an intramembrane region, pore-forming. Residues 366–374 (ATCGPMSVS) are Extracellular-facing. Residues 375 to 395 (FFTVVVFFGSFYLINLMLAVV) traverse the membrane as a helical segment. Topologically, residues 396 to 687 (ALSYEEEAEI…QNCLYKVVRD (292 aa)) are cytoplasmic. Positions 452 to 610 (ASYSKKKTRR…QDTTNDMGHV (159 aa)) are disordered. Basic residues predominate over residues 455–465 (SKKKTRRKKTK). A compositionally biased stretch (gly residues) spans 469–479 (EGGTNGNGNGS). 2 stretches are compositionally biased toward low complexity: residues 511–520 (QAQKQYQQME) and 577–586 (SSNSSGVNRE). Positions 593 to 603 (GVVDDHEEQDT) are enriched in acidic residues. One copy of the II repeat lies at 668 to 1130 (CTDYESWLQF…ESIELLGQYN (463 aa)). Residues 688-708 (PLFELAITLCIVLNTAFLAME) form a helical membrane-spanning segment. The Extracellular segment spans residues 709 to 718 (HHGMSESFRN). Residues 719–743 (ALDVGNKVFTSIFTFECIVKLMALS) traverse the membrane as a helical segment. Residues 744–749 (KDFFLC) are Cytoplasmic-facing. A helical transmembrane segment spans residues 750-769 (GWNIFDLLIVTASLLDIIFE). Topologically, residues 770–775 (LVDGLS) are extracellular. Residues 776–795 (VLRGLRLLRVLKLAQSWTTM) form a helical; Voltage-sensor membrane-spanning segment. Over 796-810 (KVLLSIIISTIGALG) the chain is Cytoplasmic. Residues 811 to 832 (NLTLILVIVIYIFAVIGMQLFS) traverse the membrane as a helical segment. The Extracellular portion of the chain corresponds to 833–852 (KDYTPEKFDPDPVPRWNFND). Residues 853–873 (FFHSFMMIFRILCGEWIEPLW) constitute an intramembrane region (pore-forming). Residues 874 to 889 (DCMRAEEEQGASTCFA) are Extracellular-facing. A disulfide bridge links cysteine 875 with cysteine 887. The chain crosses the membrane as a helical span at residues 890–910 (IFLPTLVMGNFMVLNLFLALL). At 911–1742 (LNSFNSEELK…SAKHWTRVRT (832 aa)) the chain is on the cytoplasmic side. Residues 1129-1157 (YNSTDTDPYANDQRSGCGSFNRGDSLQDN) show a composition bias toward polar residues. Disordered stretches follow at residues 1129–1166 (YNSTDTDPYANDQRSGCGSFNRGDSLQDNSSRRYGSEE), 1185–1224 (YRKSLDRLSQSSGQSQRSLLKSEEAEMRRHSSGQSLNSMS), 1268–1288 (ISNVMRSRRPSSQMGQPENET), 1577–1630 (APTP…ADAS), and 1635–1654 (LAMAQKTEQSQSTAPDATQK). Residues 1191 to 1203 (RLSQSSGQSQRSL) show a composition bias toward low complexity. A compositionally biased stretch (basic and acidic residues) spans 1204 to 1213 (LKSEEAEMRR). Polar residues-rich tracts occupy residues 1277–1286 (PSSQMGQPEN), 1604–1618 (PQSTLDKAASFQSAR), and 1640–1654 (KTEQSQSTAPDATQK). The III repeat unit spans residues 1723–2040 (PWFMSCMDTQ…QKHYYTAMKK (318 aa)). The helical transmembrane segment at 1743 to 1763 (AVLTVVDTPAFEWFVLVLIFA) threads the bilayer. Over 1764–1789 (SSITLCFEDINLDKNKTLKRVLYWIN) the chain is Extracellular. Residues asparagine 1778 and asparagine 1789 are each glycosylated (N-linked (GlcNAc...) asparagine). The chain crosses the membrane as a helical span at residues 1790-1810 (FSFCLIFVVEMILKWLALGFS). Residues 1811–1813 (KYF) lie on the Cytoplasmic side of the membrane. A helical transmembrane segment spans residues 1814-1834 (TSFWTILDFIIVFVSVFSLLI). The Extracellular portion of the chain corresponds to 1835–1839 (EENEN). A helical; Voltage-sensor transmembrane segment spans residues 1840–1861 (LKVLRSLRTLRALRPLRAISRW). Over 1862–1880 (QGMRIVVNALMYAIPSIFN) the chain is Cytoplasmic. Residues 1881 to 1902 (VLLVCLVFWLIFSIMGVQFFGG) traverse the membrane as a helical segment. The Extracellular segment spans residues 1903–1943 (KFFKCVNEMGELLPITEVNDKWDCIEQNYTWINSKITFDHV). Residue asparagine 1930 is glycosylated (N-linked (GlcNAc...) asparagine). Positions 1944–1965 (GMGYLALLQVATFEGWMEVMAD) form an intramembrane region, pore-forming. The Extracellular portion of the chain corresponds to 1966 to 1981 (AVDARGVDLQPQREAN). Residues 1982–2002 (LYAYIYFVIFIVCGSFFTLNL) traverse the membrane as a helical segment. At 2003 to 2069 (FIGVIIDNFN…MFYDLSNSRR (67 aa)) the chain is on the cytoplasmic side. An IV repeat occupies 2050–2311 (IKRPINHFLA…NMYIAIILEN (262 aa)). A helical transmembrane segment spans residues 2070-2090 (FEIAIFVLIFLNMLTMGIEHY). Residues 2091–2095 (DQPHA) lie on the Extracellular side of the membrane. Residues 2096–2116 (VFFILEVSNAFFTTVFGLEAI) form a helical membrane-spanning segment. The Cytoplasmic portion of the chain corresponds to 2117 to 2132 (VKIVGLRYHYFTVPWN). The helical transmembrane segment at 2133–2153 (VFDFLLVLASIFGILMEDIMI) threads the bilayer. The Extracellular portion of the chain corresponds to 2154 to 2162 (DLPISPTLL). Residues 2163 to 2184 (RVVRVFRIGRILRLIKAAKGIR) form a helical; Voltage-sensor membrane-spanning segment. The Cytoplasmic portion of the chain corresponds to 2185–2199 (KLLFALVVSLPALFN). Residues 2200–2220 (IGALLGLITFIYAILGMSLFG) traverse the membrane as a helical segment. Over 2221 to 2236 (NVKLQGALDDMVNFQT) the chain is Extracellular. The segment at residues 2237 to 2259 (FGRSMQLLFRLMTSAGWNDVLES) is an intramembrane region (pore-forming). Topologically, residues 2260 to 2288 (LMIQPPDCDPFIHGHTNGNCGHPLLAITY) are extracellular. A helical membrane pass occupies residues 2289-2309 (FTSFIIISYMIVINMYIAIIL). Residues 2310-2844 (ENFNQAHQEE…QFESLPDRQR (535 aa)) are Cytoplasmic-facing. One can recognise an IQ domain in the interval 2441–2470 (QEKAAKTIQTGWKEYLRRKREKERSNSGDS). 4 disordered regions span residues 2457 to 2479 (RRKREKERSNSGDSATQTSSPGG), 2584 to 2668 (SLTS…LSAQ), 2780 to 2802 (DSPKDPPRGDFSSAPIDDVGAPI), and 2818 to 2844 (NPEKATDDQGNGQDETAQFESLPDRQR). Positions 2467–2479 (SGDSATQTSSPGG) are enriched in polar residues. Low complexity predominate over residues 2595–2632 (AMNNTTNTTSNSASTSGTASSTATAPATGCGPAATSAS). Residues 2647 to 2658 (SRKRASSFIRKK) show a composition bias toward basic residues. Residues 2825–2836 (DQGNGQDETAQF) show a composition bias toward polar residues.

It belongs to the sodium channel (TC 1.A.1.10) family. NaCP60E subfamily. As to expression, in embryonic and larval stages, expression is limited to very few non-neuronal cells in either the CNS or PNS. In pupal and adult stages, expressed in cell bodies of the fly central nervous system, including optic lobes, central brain, subesophageal ganglion, thoracico-abdominal ganglion, major olfactory organs, the third antennal segment and the maxillary palps.

The protein resides in the cell membrane. Its function is as follows. Mediates the voltage-dependent sodium ion permeability of excitable membranes. Plays a role in processing of olfactory information during the olfactory avoidance response. The polypeptide is Sodium channel protein 60E (NaCP60E) (Drosophila melanogaster (Fruit fly)).